The primary structure comprises 218 residues: Pyridoxine/pyridoxamine 5'-phosphate oxidase (218 aa).

Substrate-binding positions include 12-15 (RLAY) and R70. FMN contacts are provided by residues 65–70 (RTVLLR), 80–81 (YT), K87, and Q109. 3 residues coordinate substrate: Y127, R131, and S135. Residues 145–146 (QS) and W191 contribute to the FMN site. Residue 197 to 199 (RLH) participates in substrate binding. Residue R201 participates in FMN binding.

It belongs to the pyridoxamine 5'-phosphate oxidase family. In terms of assembly, homodimer. FMN is required as a cofactor.

The enzyme catalyses pyridoxamine 5'-phosphate + O2 + H2O = pyridoxal 5'-phosphate + H2O2 + NH4(+). It carries out the reaction pyridoxine 5'-phosphate + O2 = pyridoxal 5'-phosphate + H2O2. Its pathway is cofactor metabolism; pyridoxal 5'-phosphate salvage; pyridoxal 5'-phosphate from pyridoxamine 5'-phosphate: step 1/1. It functions in the pathway cofactor metabolism; pyridoxal 5'-phosphate salvage; pyridoxal 5'-phosphate from pyridoxine 5'-phosphate: step 1/1. Catalyzes the oxidation of either pyridoxine 5'-phosphate (PNP) or pyridoxamine 5'-phosphate (PMP) into pyridoxal 5'-phosphate (PLP). The chain is Pyridoxine/pyridoxamine 5'-phosphate oxidase from Deinococcus geothermalis (strain DSM 11300 / CIP 105573 / AG-3a).